Reading from the N-terminus, the 297-residue chain is Phosphoribosylaminoimidazole-succinocarboxamide synthase (297 aa).

The protein belongs to the SAICAR synthetase family.

The enzyme catalyses 5-amino-1-(5-phospho-D-ribosyl)imidazole-4-carboxylate + L-aspartate + ATP = (2S)-2-[5-amino-1-(5-phospho-beta-D-ribosyl)imidazole-4-carboxamido]succinate + ADP + phosphate + 2 H(+). It participates in purine metabolism; IMP biosynthesis via de novo pathway; 5-amino-1-(5-phospho-D-ribosyl)imidazole-4-carboxamide from 5-amino-1-(5-phospho-D-ribosyl)imidazole-4-carboxylate: step 1/2. In Corynebacterium glutamicum (strain ATCC 13032 / DSM 20300 / JCM 1318 / BCRC 11384 / CCUG 27702 / LMG 3730 / NBRC 12168 / NCIMB 10025 / NRRL B-2784 / 534), this protein is Phosphoribosylaminoimidazole-succinocarboxamide synthase.